We begin with the raw amino-acid sequence, 361 residues long: UDP-3-O-acylglucosamine N-acyltransferase (361 aa).

The active-site Proton acceptor is histidine 253.

The protein belongs to the transferase hexapeptide repeat family. LpxD subfamily. Homotrimer.

It catalyses the reaction a UDP-3-O-[(3R)-3-hydroxyacyl]-alpha-D-glucosamine + a (3R)-hydroxyacyl-[ACP] = a UDP-2-N,3-O-bis[(3R)-3-hydroxyacyl]-alpha-D-glucosamine + holo-[ACP] + H(+). Its pathway is bacterial outer membrane biogenesis; LPS lipid A biosynthesis. In terms of biological role, catalyzes the N-acylation of UDP-3-O-acylglucosamine using 3-hydroxyacyl-ACP as the acyl donor. Is involved in the biosynthesis of lipid A, a phosphorylated glycolipid that anchors the lipopolysaccharide to the outer membrane of the cell. The chain is UDP-3-O-acylglucosamine N-acyltransferase from Burkholderia thailandensis (strain ATCC 700388 / DSM 13276 / CCUG 48851 / CIP 106301 / E264).